The sequence spans 494 residues: MSASKHIICEYSSEDPSKDFEVHNPATGAVIAIVRAGDATTLDKAVQVAHKAFLEWKKVPLTRRSQLMFKCAEEVEKHAEELAELLTTENGKLLSDGRMVDVNFVSQVYRYFGSLIDKLPGEFHDSGSVYRYVTREPHGVCGGILPFNWPPIHTAGKSAPCIAMGNTIIIKPGEQAPLTSMRIVDILNTVLPKGVVQYVPGVGPEVPQALTAHPLVKMVSITGSTTAGKAVVMAASALVKPTVLELGGKNALVVFPDADLHRAARDALEGAFFNKGEACTATSRLLIHNDIYDAFIEKYAAAVCKLQAGNGLKKGTHVGPCVTQAQKERVLDFIRIGEEEGATIAAQGRLPDDAEEKDGFFVAPTLFTNVKHSMRIAQEEIFGPVVTACKFDSEEEAVSIINGARWGLTCAIYSGNQELALRMCRQVDVGMTFINNYFRNTLGIPFGGVKETGYGREHCIDTLKDWSTSKVIQMPSGLAPVPSWPPVNELLPWQ.

Residue 223 to 228 (GSTTAG) participates in NAD(+) binding. Catalysis depends on residues E245 and C279.

It belongs to the aldehyde dehydrogenase family.

The enzyme catalyses an aldehyde + NAD(+) + H2O = a carboxylate + NADH + 2 H(+). It participates in mycotoxin biosynthesis. In terms of biological role, aldehyde dehydrogenase; part of the gene cluster that mediates the biosynthesis of the selective antifungal agent ascochitine, an o-quinone methide that plays a possible protective role against other microbial competitors in nature and is considered to be important for pathogenicity of legume-associated Didymella species. The pathway probably begins with the synthesis of a keto-aldehyde intermediate by the ascochitine non-reducing polyketide synthase pksAC from successive condensations of 4 malonyl-CoA units, presumably with a simple acetyl-CoA starter unit. Release of the keto-aldehyde intermediate is consistent with the presence of the C-terminal reductive release domain. The HR-PKS (orf7) probably makes a diketide starter unit which is passed to the non-reducing polyketide synthase pksAC for further extension, producing ascochital and ascochitine. The aldehyde dehydrogenase (orf1), the 2-oxoglutarate-dependent dioxygenase (orf3) and the dehydrogenase (orf9) are probably involved in subsequent oxidations of methyl groups to the carboxylic acid of the heterocyclic ring. The ascochitine gene cluster also includes a gene encoding a short peptide with a cupin domain (orf2) that is often found in secondary metabolite gene clusters and which function has still to be determined. This chain is Aldehyde dehydrogenase, found in Didymella fabae (Leaf and pod spot disease fungus).